The chain runs to 351 residues: Putative F-box protein At4g09790 (351 aa).

An F-box domain is found at 1-51 (MTTICDLPRDLVARILSRVPLTSMRRVRFTCKRWNTISKDPSFAKTHFGKA).

The protein is Putative F-box protein At4g09790 of Arabidopsis thaliana (Mouse-ear cress).